The following is a 157-amino-acid chain: Xanthine-guanine phosphoribosyltransferase (157 aa).

Residues 42–43 (RG) and 93–101 (DDLVDTGNT) contribute to the 5-phospho-alpha-D-ribose 1-diphosphate site. Residue Asp-94 coordinates Mg(2+). Guanine contacts are provided by Asp-97 and Ile-140. Xanthine contacts are provided by Asp-97 and Ile-140. GMP is bound by residues 97–101 (DTGNT) and 139–140 (WI).

This sequence belongs to the purine/pyrimidine phosphoribosyltransferase family. XGPT subfamily. As to quaternary structure, homotetramer. It depends on Mg(2+) as a cofactor.

The protein localises to the cell inner membrane. It carries out the reaction GMP + diphosphate = guanine + 5-phospho-alpha-D-ribose 1-diphosphate. The enzyme catalyses XMP + diphosphate = xanthine + 5-phospho-alpha-D-ribose 1-diphosphate. The catalysed reaction is IMP + diphosphate = hypoxanthine + 5-phospho-alpha-D-ribose 1-diphosphate. The protein operates within purine metabolism; GMP biosynthesis via salvage pathway; GMP from guanine: step 1/1. It functions in the pathway purine metabolism; XMP biosynthesis via salvage pathway; XMP from xanthine: step 1/1. In terms of biological role, purine salvage pathway enzyme that catalyzes the transfer of the ribosyl-5-phosphate group from 5-phospho-alpha-D-ribose 1-diphosphate (PRPP) to the N9 position of the 6-oxopurines guanine and xanthine to form the corresponding ribonucleotides GMP (guanosine 5'-monophosphate) and XMP (xanthosine 5'-monophosphate), with the release of PPi. To a lesser extent, also acts on hypoxanthine. In Actinobacillus pleuropneumoniae serotype 5b (strain L20), this protein is Xanthine-guanine phosphoribosyltransferase.